The chain runs to 379 residues: Thiosulfate/3-mercaptopyruvate sulfurtransferase 1, mitochondrial (379 aa).

The N-terminal 56 residues, Met1–Arg56, are a transit peptide targeting the mitochondrion. An N-acetylalanine modification is found at Ala57. Rhodanese domains are found at residues Arg91 to Ser208 and Glu259 to Glu373. The Cysteine persulfide intermediate role is filled by Cys333.

In terms of tissue distribution, expressed in roots, rosette and cauline leaves, stems, flowers and siliques.

The protein localises to the mitochondrion. The enzyme catalyses thiosulfate + hydrogen cyanide = thiocyanate + sulfite + 2 H(+). The catalysed reaction is 2-oxo-3-sulfanylpropanoate + [thioredoxin]-dithiol = [thioredoxin]-disulfide + hydrogen sulfide + pyruvate + H(+). Its function is as follows. Catalyzes the transfer of a sulfur ion from a donor to cyanide or to other thiol compounds. Substrate preference is 3-mercaptopyruvate &gt; thiosulfate. Involved in embryo and seed development. The polypeptide is Thiosulfate/3-mercaptopyruvate sulfurtransferase 1, mitochondrial (STR1) (Arabidopsis thaliana (Mouse-ear cress)).